A 336-amino-acid polypeptide reads, in one-letter code: 3-isopropylmalate dehydrogenase (336 aa).

Arg-87, Arg-97, Arg-121, and Asp-211 together coordinate substrate. The Mg(2+) site is built by Asp-211, Asp-235, and Asp-239. 271–283 contacts NAD(+); that stretch reads GSAPDIAGQGIAD.

Belongs to the isocitrate and isopropylmalate dehydrogenases family. LeuB type 2 subfamily. In terms of assembly, homodimer. Mg(2+) serves as cofactor. The cofactor is Mn(2+).

It is found in the cytoplasm. The enzyme catalyses (2R,3S)-3-isopropylmalate + NAD(+) = 4-methyl-2-oxopentanoate + CO2 + NADH. Its pathway is amino-acid biosynthesis; L-leucine biosynthesis; L-leucine from 3-methyl-2-oxobutanoate: step 3/4. In terms of biological role, catalyzes the oxidation of 3-carboxy-2-hydroxy-4-methylpentanoate (3-isopropylmalate) to 3-carboxy-4-methyl-2-oxopentanoate. The product decarboxylates to 4-methyl-2 oxopentanoate. This is 3-isopropylmalate dehydrogenase from Mycolicibacterium paratuberculosis (strain ATCC BAA-968 / K-10) (Mycobacterium paratuberculosis).